Here is a 411-residue protein sequence, read N- to C-terminus: Arginine deiminase 1 (411 aa).

Cysteine 401 acts as the Amidino-cysteine intermediate in catalysis.

It belongs to the arginine deiminase family.

Its subcellular location is the cytoplasm. It carries out the reaction L-arginine + H2O = L-citrulline + NH4(+). It functions in the pathway amino-acid degradation; L-arginine degradation via ADI pathway; carbamoyl phosphate from L-arginine: step 1/2. The protein is Arginine deiminase 1 (arcA1) of Staphylococcus epidermidis (strain ATCC 12228 / FDA PCI 1200).